The primary structure comprises 155 residues: Protein-export protein SecB (155 aa).

The protein belongs to the SecB family. As to quaternary structure, homotetramer, a dimer of dimers. One homotetramer interacts with 1 SecA dimer.

It is found in the cytoplasm. In terms of biological role, one of the proteins required for the normal export of preproteins out of the cell cytoplasm. It is a molecular chaperone that binds to a subset of precursor proteins, maintaining them in a translocation-competent state. It also specifically binds to its receptor SecA. This chain is Protein-export protein SecB, found in Cronobacter sakazakii (strain ATCC BAA-894) (Enterobacter sakazakii).